The primary structure comprises 92 residues: Islet amyloid polypeptide (92 aa).

The first 22 residues, 1 to 22 (MHISKLPAALLIFSVALNHLKA), serve as a signal peptide directing secretion. Residues 23–34 (TPVRSGTNHQMD) constitute a propeptide that is removed on maturation. An intrachain disulfide couples cysteine 38 to cysteine 43. Tyrosine 73 bears the Tyrosine amide mark. A propeptide spanning residues 77 to 92 (SAAEIPDGDSLDLFLL) is cleaved from the precursor.

This sequence belongs to the calcitonin family. Can form homodimers. Interacts with IDE and INS. Interaction with INS inhibits homodimerization and fibril formation.

It localises to the secreted. Amylin/IAPP is a glucoregulatory peptide hormone that plays an important role in the regulation of energy homeostasis. Selectively inhibits insulin-stimulated glucose utilization and glycogen deposition in muscle, while not affecting adipocyte glucose metabolism. IAPP function is mediated by the CALCR-RAMPs (AMYRs) receptor complexes. Amylin can also bind CALCR receptor in the absence of RAMPs, although it is more selective for AMYRs. The polypeptide is Islet amyloid polypeptide (IAPP) (Mesocricetus auratus (Golden hamster)).